Here is a 391-residue protein sequence, read N- to C-terminus: GDP-mannose transporter (391 aa).

Basic and acidic residues predominate over residues 1 to 11 (MDDKKNEDVEM). Residues 1-28 (MDDKKNEDVEMRNFNGRSSPSQRDPFIS) are disordered. The Cytoplasmic portion of the chain corresponds to 1–44 (MDDKKNEDVEMRNFNGRSSPSQRDPFISKPGAAKRGGSSFDLSN). Residues 45–65 (VTNSPGISILAYCLASISMTV) form a helical membrane-spanning segment. Residues 66 to 75 (TNKYCVSGSN) lie on the Lumenal side of the membrane. Residues 76–96 (WNLNFFYLAIQSVVCIIAIII) traverse the membrane as a helical segment. The Cytoplasmic portion of the chain corresponds to 97–115 (CKQAGLITNLAPFDTKKAK). A helical membrane pass occupies residues 116 to 138 (TWFPISLLLVGMIYTSTKALQFL). Residues 139–141 (SVP) lie on the Lumenal side of the membrane. The chain crosses the membrane as a helical span at residues 142–164 (VYTIFKNLTIIVIAYGEVLWFGG). The Cytoplasmic portion of the chain corresponds to 165–170 (SVTPSA). The chain crosses the membrane as a helical span at residues 171–193 (LFSFGLMVLSSVVAAWADIQHAL). The Lumenal segment spans residues 194-209 (YGGGATQTKEAADALS). The chain crosses the membrane as a helical span at residues 210–230 (TLNAGYAWMGMNVFCTAAYVL). At 231–245 (SMRKVIKKMNFKDWD) the chain is on the cytoplasmic side. Residues 246–266 (TMFYNNLLTIPVLFVCSFVFE) traverse the membrane as a helical segment. N-linked (GlcNAc...) asparagine glycans are attached at residues asparagine 267 and asparagine 272. At 267 to 284 (NWSSENLTKNFPLETRNN) the chain is on the lumenal side. A helical membrane pass occupies residues 285 to 305 (LILGMIYSGLATIFISYCSAW). Residues 306–313 (CIRVTSST) lie on the Cytoplasmic side of the membrane. A helical transmembrane segment spans residues 314 to 336 (TYSMVGALNKLPIAVSGLVFFAA). Over 337-339 (PVT) the chain is Lumenal. A helical membrane pass occupies residues 340-359 (FGSVSAIFIGFVSGIVYAWA). Topologically, residues 360 to 391 (KVRQNQSKGSVLPTTQPVMSASSQSNRDAAKA) are cytoplasmic. Positions 369-391 (SVLPTTQPVMSASSQSNRDAAKA) are disordered.

Belongs to the TPT transporter family. SLC35D subfamily. As to quaternary structure, homooligomer.

The protein localises to the golgi apparatus membrane. Its subcellular location is the cytoplasmic vesicle membrane. The protein resides in the endoplasmic reticulum membrane. Involved in the import of GDP-mannose from the cytoplasm into the Golgi lumen. The sequence is that of GDP-mannose transporter (vrg4) from Sclerotinia sclerotiorum (strain ATCC 18683 / 1980 / Ss-1) (White mold).